An 890-amino-acid chain; its full sequence is MAASVGNRQFATHMNGVVRSCGQDLKPSLPLDFDLDSSSSDDDENDDASYLKELVRKANAETEASVMDPRDEGTADQWVARNASMVRLTGKHPFNAESPLQRLMHHGFITPVPLHYVRNHGPVPKANWEDWTVEITGLVKRPTRFTMDRLVREFPHREFPATLVCAGNRRKEQNMVKKTIGFNWGSAGTSTSVWRGVPVRHVLRRCGILTRGKGALHVSFEGAENLPGGGGSKYGTSISREMAMDPSRDIILAYMQNGEPLAPDHGFPIRMIIPGFIGGRMVKWLKRIVVTEQECESHYHYKDNRVLPSHVDPELANEEGWWFKPEYIINELNINSVITTPCHDEILPINSWTTQRPYVVRGYAYSGGGRKVTRVEVTLDGGETWHVCTLDHPEKPNKYGKYWCWCFWSLEVEVLDLLGTKEIAVRAWDEGLNTQPENLIWNLMGMMNNCWFRVKTNVCKPHKGEIGIVFEHPTQPGNQPGGWMAKEKHLEQSQEAKPSLKKSVSTPFMNTASKMFSVSEVKKHSSPDSAWIIVHGHVYDCTRFLKDHPGGTDSILINAGTDCTEEFDAIHSDKAKKMLEDYRIGELITTGYTSADSSPNNSVHGNSEFIHLAPINEITTIPPLPPRSVALNPRQKIPCKLVSKTSISHDVRLFRFEMPSKNQLLGLPVGKHIFLCATIDGKLCMRAYTPTSSVEEVGFFDLLIKVYFKDVHPKFPNGGLMSQYLESLSIGSMLDVKGPLGHIEYTGRGNFTVNGKSRFAKRLAMLAGGTGITPIYQVAQAILKDPEDLTEMHVVYANRTEDDILLREELDTWAKEHCERFKVWYVVETAKEGWGYGVGFITEAIMREHLPEASSDSLAMTCGPPPMIQFAVQPNLEKMGYDIKNDLLVF.

Cys-165 contacts Mo-molybdopterin. A Cytochrome b5 heme-binding domain is found at 513–588; the sequence is SKMFSVSEVK…LEDYRIGELI (76 aa). Heme is bound by residues His-548 and His-571. One can recognise an FAD-binding FR-type domain in the interval 634-746; sequence RQKIPCKLVS…KGPLGHIEYT (113 aa). FAD is bound by residues 686 to 689, 703 to 707, Phe-708, Phe-715, 720 to 722, and Thr-773; these read RAYT, LIKVY, and LMS.

This sequence belongs to the nitrate reductase family. In terms of assembly, homodimer. FAD serves as cofactor. It depends on heme as a cofactor. Mo-molybdopterin is required as a cofactor.

The enzyme catalyses nitrite + NAD(+) + H2O = nitrate + NADH + H(+). Functionally, nitrate reductase is a key enzyme involved in the first step of nitrate assimilation in plants, fungi and bacteria. The chain is Nitrate reductase [NADH] 2 (NIA2) from Phaseolus vulgaris (Kidney bean).